The following is a 565-amino-acid chain: NAD-dependent malic enzyme (565 aa).

Tyr104 serves as the catalytic Proton donor. Residue Arg157 participates in NAD(+) binding. Lys175 functions as the Proton acceptor in the catalytic mechanism. Residues Glu246, Asp247, and Asp270 each contribute to the a divalent metal cation site. Residues Asp270 and Asn418 each coordinate NAD(+).

This sequence belongs to the malic enzymes family. Homotetramer. Mg(2+) serves as cofactor. Requires Mn(2+) as cofactor.

It catalyses the reaction (S)-malate + NAD(+) = pyruvate + CO2 + NADH. It carries out the reaction oxaloacetate + H(+) = pyruvate + CO2. The polypeptide is NAD-dependent malic enzyme (Shigella boydii serotype 18 (strain CDC 3083-94 / BS512)).